The sequence spans 163 residues: Periplasmic nitrate reductase, electron transfer subunit (163 aa).

The N-terminal stretch at 1 to 32 is a signal peptide; it reads MRSQDPSRRLSRRLWTLFALALCLVTGTVALA. 8 residues coordinate heme c: H76, C90, C93, H94, H111, C130, C133, and H134.

It belongs to the NapB family. In terms of assembly, component of the periplasmic nitrate reductase NapAB complex composed of NapA and NapB. Post-translationally, binds 2 heme C groups per subunit.

It localises to the periplasm. In terms of biological role, electron transfer subunit of the periplasmic nitrate reductase complex NapAB. Receives electrons from the membrane-anchored tetraheme c-type NapC protein and transfers these to NapA subunit, thus allowing electron flow between membrane and periplasm. Essential for periplasmic nitrate reduction with nitrate as the terminal electron acceptor. This is Periplasmic nitrate reductase, electron transfer subunit from Neorhizobium galegae (Rhizobium galegae).